We begin with the raw amino-acid sequence, 241 residues long: MELQFRQPHFSDALLLLLLSNLLLWEKASSIPACMAEKSGCWNPRMETFDSAIRKAETLRTVSKQFYVELYHNQFSSGKFATLTSKLVRRDEIVFRAASHCHSTLTNPPNKGIQYITIEIPEYLKTLINYVGAWISPLFHLVIELSAMKDVPETILSKAKEIEENNRQILRDLRWIITEVYPTSKKKEIFPSWELLSFLKSSSRNSKFLAMFNLSHCLEYDTQFFLFHLRILKCRITGKDC.

The first 30 residues, 1-30 (MELQFRQPHFSDALLLLLLSNLLLWEKASS), serve as a signal peptide directing secretion. Disulfide bonds link Cys34/Cys41, Cys101/Cys217, and Cys234/Cys241. N-linked (GlcNAc...) asparagine glycosylation occurs at Asn213.

Belongs to the somatotropin/prolactin family. As to expression, expressed specifically in the placenta. Predominantly expressed in spongiotrophoblast cells.

The protein resides in the secreted. This Mus musculus (Mouse) protein is Prolactin-8A8 (Prl8a8).